We begin with the raw amino-acid sequence, 438 residues long: Glutamyl-tRNA reductase (438 aa).

Substrate-binding positions include 49–52 (TCNR), serine 109, 114–116 (EGQ), and glutamine 120. Cysteine 50 serves as the catalytic Nucleophile. NADP(+) is bound at residue 197–202 (GAGKMS).

This sequence belongs to the glutamyl-tRNA reductase family. Homodimer.

It catalyses the reaction (S)-4-amino-5-oxopentanoate + tRNA(Glu) + NADP(+) = L-glutamyl-tRNA(Glu) + NADPH + H(+). It participates in porphyrin-containing compound metabolism; protoporphyrin-IX biosynthesis; 5-aminolevulinate from L-glutamyl-tRNA(Glu): step 1/2. It functions in the pathway porphyrin-containing compound metabolism; chlorophyll biosynthesis. Catalyzes the NADPH-dependent reduction of glutamyl-tRNA(Glu) to glutamate 1-semialdehyde (GSA). The protein is Glutamyl-tRNA reductase of Synechococcus elongatus (strain ATCC 33912 / PCC 7942 / FACHB-805) (Anacystis nidulans R2).